A 294-amino-acid chain; its full sequence is tRNA dimethylallyltransferase (294 aa).

9–16 (GATATGKS) provides a ligand contact to ATP. A substrate-binding site is contributed by 11 to 16 (TATGKS). Residues 34–37 (DSRQ) form an interaction with substrate tRNA region.

It belongs to the IPP transferase family. As to quaternary structure, monomer. The cofactor is Mg(2+).

It carries out the reaction adenosine(37) in tRNA + dimethylallyl diphosphate = N(6)-dimethylallyladenosine(37) in tRNA + diphosphate. Its function is as follows. Catalyzes the transfer of a dimethylallyl group onto the adenine at position 37 in tRNAs that read codons beginning with uridine, leading to the formation of N6-(dimethylallyl)adenosine (i(6)A). This is tRNA dimethylallyltransferase from Trichormus variabilis (strain ATCC 29413 / PCC 7937) (Anabaena variabilis).